A 280-amino-acid polypeptide reads, in one-letter code: Phosphate import ATP-binding protein PstB (280 aa).

One can recognise an ABC transporter domain in the interval 34-275; that stretch reads IEVKNLNFFY…PARKETEDYI (242 aa). ATP is bound at residue 66–73; it reads GPSGCGKS.

This sequence belongs to the ABC transporter superfamily. Phosphate importer (TC 3.A.1.7) family. The complex is composed of two ATP-binding proteins (PstB), two transmembrane proteins (PstC and PstA) and a solute-binding protein (PstS).

The protein localises to the cell inner membrane. The enzyme catalyses phosphate(out) + ATP + H2O = ADP + 2 phosphate(in) + H(+). In terms of biological role, part of the ABC transporter complex PstSACB involved in phosphate import. Responsible for energy coupling to the transport system. The sequence is that of Phosphate import ATP-binding protein PstB from Burkholderia mallei (strain ATCC 23344).